We begin with the raw amino-acid sequence, 289 residues long: Acetylglutamate kinase (289 aa).

Substrate is bound by residues 65 to 66, R87, and N187; that span reads GG.

It belongs to the acetylglutamate kinase family. ArgB subfamily.

The protein localises to the cytoplasm. It carries out the reaction N-acetyl-L-glutamate + ATP = N-acetyl-L-glutamyl 5-phosphate + ADP. The protein operates within amino-acid biosynthesis; L-arginine biosynthesis; N(2)-acetyl-L-ornithine from L-glutamate: step 2/4. In terms of biological role, catalyzes the ATP-dependent phosphorylation of N-acetyl-L-glutamate. This Chromobacterium violaceum (strain ATCC 12472 / DSM 30191 / JCM 1249 / CCUG 213 / NBRC 12614 / NCIMB 9131 / NCTC 9757 / MK) protein is Acetylglutamate kinase.